Reading from the N-terminus, the 185-residue chain is uncharacterized protein (185 aa).

Positions 1–18 (MLLKLILILCFLVTLSLS) are cleaved as a signal peptide. The segment at 30–185 (TQGPTIASGG…VQDCGEITGW (156 aa)) is disordered. Residues 86-101 (RAQEGGKKDTTKEQPK) show a composition bias toward basic and acidic residues. Low complexity predominate over residues 103-116 (NNNNKNLGRHSSSG). Residues 117-135 (SGSGSGSGCGVTGDTGTGS) are compositionally biased toward gly residues.

It is found in the secreted. This is an uncharacterized protein from Dictyostelium discoideum (Social amoeba).